The following is a 397-amino-acid chain: Probable sugar efflux transporter (397 aa).

The next 12 helical transmembrane spans lie at 15-35, 51-71, 81-101, 103-123, 136-156, 170-190, 209-229, 246-266, 273-293, 301-321, 333-353, and 364-384; these read VVTL…PVGL, GIML…FMLL, LICL…AWSF, VLVI…SITA, AQAL…GLPV, FLAI…LLPL, PALM…YTAY, FATV…VIFG, ASVL…LLMP, LAIL…GMQV, VAMS…ALVG, and DIGY…VIIF.

Belongs to the major facilitator superfamily. SotB (TC 2.A.1.2) family.

It is found in the cell inner membrane. Involved in the efflux of sugars. The physiological role may be the reduction of the intracellular concentration of toxic sugars or sugar metabolites. The protein is Probable sugar efflux transporter of Escherichia fergusonii (strain ATCC 35469 / DSM 13698 / CCUG 18766 / IAM 14443 / JCM 21226 / LMG 7866 / NBRC 102419 / NCTC 12128 / CDC 0568-73).